Reading from the N-terminus, the 37-residue chain is Large ribosomal subunit protein bL36c (37 aa).

The protein belongs to the bacterial ribosomal protein bL36 family.

The protein localises to the plastid. Its subcellular location is the chloroplast. The protein is Large ribosomal subunit protein bL36c (rpl36) of Cyanidium caldarium (Red alga).